A 727-amino-acid polypeptide reads, in one-letter code: Anaphase-promoting complex subunit 5 (727 aa).

Position 180 is a phosphoserine (Ser180). 13 TPR repeats span residues 194–234 (QKQA…FNPD), 235–285 (FAEA…GRSL), 286–322 (RYAA…SNDH), 323–359 (VCLQ…FGLP), 360–390 (RAFA…SELI), 391–438 (DISI…TESF), 439–472 (AVAL…FPPN), 473–512 (SQHA…ALNG), 513–552 (IEGV…TEMV), 553–592 (ISVL…QYLA), 593–632 (SETV…ILDK), 633–668 (GRAM…NLTE), and 669–708 (AKNY…CAMV). Residue Thr217 is modified to Phosphothreonine.

It belongs to the APC5 family. As to quaternary structure, the mammalian APC/C is composed at least of 14 distinct subunits ANAPC1, ANAPC2, CDC27/APC3, ANAPC4, ANAPC5, CDC16/APC6, ANAPC7, CDC23/APC8, ANAPC10, ANAPC11, CDC26/APC12, ANAPC13, ANAPC15 and ANAPC16 that assemble into a complex of at least 19 chains with a combined molecular mass of around 1.2 MDa; APC/C interacts with FZR1 and FBXO5.

It localises to the nucleus. It is found in the cytoplasm. The protein resides in the cytoskeleton. The protein localises to the spindle. Its pathway is protein modification; protein ubiquitination. Functionally, component of the anaphase promoting complex/cyclosome (APC/C), a cell cycle-regulated E3 ubiquitin ligase that controls progression through mitosis and the G1 phase of the cell cycle. The APC/C complex acts by mediating ubiquitination and subsequent degradation of target proteins: it mainly mediates the formation of 'Lys-11'-linked polyubiquitin chains and, to a lower extent, the formation of 'Lys-48'- and 'Lys-63'-linked polyubiquitin chains. The APC/C complex catalyzes assembly of branched 'Lys-11'-/'Lys-48'-linked branched ubiquitin chains on target proteins. The sequence is that of Anaphase-promoting complex subunit 5 (Anapc5) from Rattus norvegicus (Rat).